The chain runs to 429 residues: UDP-N-acetylglucosamine 1-carboxyvinyltransferase 2 (429 aa).

22 to 23 (KN) is a phosphoenolpyruvate binding site. R93 lines the UDP-N-acetyl-alpha-D-glucosamine pocket. C117 serves as the catalytic Proton donor. C117 carries the 2-(S-cysteinyl)pyruvic acid O-phosphothioketal modification. UDP-N-acetyl-alpha-D-glucosamine is bound by residues 122–126 (RPIDQ), D305, and I327.

It belongs to the EPSP synthase family. MurA subfamily.

It localises to the cytoplasm. The catalysed reaction is phosphoenolpyruvate + UDP-N-acetyl-alpha-D-glucosamine = UDP-N-acetyl-3-O-(1-carboxyvinyl)-alpha-D-glucosamine + phosphate. Its pathway is cell wall biogenesis; peptidoglycan biosynthesis. In terms of biological role, cell wall formation. Adds enolpyruvyl to UDP-N-acetylglucosamine. In Bacillus cereus (strain ATCC 14579 / DSM 31 / CCUG 7414 / JCM 2152 / NBRC 15305 / NCIMB 9373 / NCTC 2599 / NRRL B-3711), this protein is UDP-N-acetylglucosamine 1-carboxyvinyltransferase 2.